The chain runs to 658 residues: Putative endo-beta-N-acetylglucosaminidase (658 aa).

The signal sequence occupies residues 1–23 (MKKVRFIFLALLFFLASPEGAMA). 13 Cell wall-binding repeats span residues 42-63 (ANEW…DANY), 65-84 (ENEW…GGYM), 86-105 (KSEW…DGKM), 124-145 (IEDW…DGQH), 147-166 (EKEW…GGYL), 185-206 (QQGW…NGNY), 208-227 (DKEW…GGYM), 229-248 (ANEW…DGKM), 250-271 (EKEW…GGYM), 273-292 (ANEW…DGKI), 294-315 (EKEW…GGYM), 317-336 (ANEW…DGKI), and 338-359 (EKEW…GGYM).

The protein belongs to the glycosyl hydrolase 73 family.

Its subcellular location is the secreted. The catalysed reaction is an N(4)-(oligosaccharide-(1-&gt;3)-[oligosaccharide-(1-&gt;6)]-beta-D-Man-(1-&gt;4)-beta-D-GlcNAc-(1-&gt;4)-alpha-D-GlcNAc)-L-asparaginyl-[protein] + H2O = an oligosaccharide-(1-&gt;3)-[oligosaccharide-(1-&gt;6)]-beta-D-Man-(1-&gt;4)-D-GlcNAc + N(4)-(N-acetyl-beta-D-glucosaminyl)-L-asparaginyl-[protein]. In terms of biological role, plays an important role in cell wall degradation and cell separation. This Streptococcus pneumoniae serotype 4 (strain ATCC BAA-334 / TIGR4) protein is Putative endo-beta-N-acetylglucosaminidase (lytB).